The chain runs to 162 residues: N5-carboxyaminoimidazole ribonucleotide mutase (162 aa).

Positions 11, 14, and 41 each coordinate substrate.

Belongs to the AIR carboxylase family. Class I subfamily.

The enzyme catalyses 5-carboxyamino-1-(5-phospho-D-ribosyl)imidazole + H(+) = 5-amino-1-(5-phospho-D-ribosyl)imidazole-4-carboxylate. It functions in the pathway purine metabolism; IMP biosynthesis via de novo pathway; 5-amino-1-(5-phospho-D-ribosyl)imidazole-4-carboxylate from 5-amino-1-(5-phospho-D-ribosyl)imidazole (N5-CAIR route): step 2/2. Functionally, catalyzes the conversion of N5-carboxyaminoimidazole ribonucleotide (N5-CAIR) to 4-carboxy-5-aminoimidazole ribonucleotide (CAIR). The protein is N5-carboxyaminoimidazole ribonucleotide mutase of Bacillus subtilis (strain 168).